Consider the following 438-residue polypeptide: UPF0229 protein Smed_1028 (438 aa).

A disordered region spans residues 55-107; it reads PARGVNEPAFQPDSNSGERRHVLPGNREFAAGDRIPKRGGGGGAGNAGAGTGQ. Positions 92 to 105 are enriched in gly residues; sequence RGGGGGAGNAGAGT.

It belongs to the UPF0229 family.

The chain is UPF0229 protein Smed_1028 from Sinorhizobium medicae (strain WSM419) (Ensifer medicae).